A 78-amino-acid chain; its full sequence is Large ribosomal subunit protein bL28 (78 aa).

The tract at residues 1–25 (MSRVCQVTGKRPAVGNNRSHARNAT) is disordered.

The protein belongs to the bacterial ribosomal protein bL28 family.

The protein is Large ribosomal subunit protein bL28 of Vibrio vulnificus (strain CMCP6).